A 421-amino-acid chain; its full sequence is 3-isopropylmalate dehydratase large subunit (421 aa).

3 residues coordinate [4Fe-4S] cluster: C301, C361, and C364.

Belongs to the aconitase/IPM isomerase family. LeuC type 2 subfamily. In terms of assembly, heterodimer of LeuC and LeuD. Requires [4Fe-4S] cluster as cofactor.

It carries out the reaction (2R,3S)-3-isopropylmalate = (2S)-2-isopropylmalate. It participates in amino-acid biosynthesis; L-leucine biosynthesis; L-leucine from 3-methyl-2-oxobutanoate: step 2/4. Its function is as follows. Catalyzes the isomerization between 2-isopropylmalate and 3-isopropylmalate, via the formation of 2-isopropylmaleate. The protein is 3-isopropylmalate dehydratase large subunit of Desulfitobacterium hafniense (strain Y51).